Here is a 118-residue protein sequence, read N- to C-terminus: Ribosome-binding factor A (118 aa).

The protein belongs to the RbfA family. Monomer. Binds 30S ribosomal subunits, but not 50S ribosomal subunits or 70S ribosomes.

The protein resides in the cytoplasm. In terms of biological role, one of several proteins that assist in the late maturation steps of the functional core of the 30S ribosomal subunit. Associates with free 30S ribosomal subunits (but not with 30S subunits that are part of 70S ribosomes or polysomes). Required for efficient processing of 16S rRNA. May interact with the 5'-terminal helix region of 16S rRNA. The chain is Ribosome-binding factor A from Bacillus thuringiensis (strain Al Hakam).